We begin with the raw amino-acid sequence, 353 residues long: Photosystem II protein D1 (353 aa).

N-acetylthreonine is present on T2. T2 is modified (phosphothreonine). A run of 3 helical transmembrane segments spans residues 29–46 (YIGW…TATS), 118–133 (HFLL…EWEL), and 142–156 (WIAV…AAAA). H118 serves as a coordination point for chlorophyll a. Y126 lines the pheophytin a pocket. Positions 170 and 189 each coordinate [CaMn4O5] cluster. A helical transmembrane segment spans residues 197–218 (FHMLGVAGVFGGSLFSAMHGSL). H198 lines the chlorophyll a pocket. A quinone contacts are provided by residues H215 and 264-265 (SF). H215 contributes to the Fe cation binding site. Position 272 (H272) interacts with Fe cation. A helical membrane pass occupies residues 274-288 (FLAAWPVVGIWFTAL). 4 residues coordinate [CaMn4O5] cluster: H332, E333, D342, and A344. A propeptide spanning residues 345 to 353 (SVDAPSING) is cleaved from the precursor.

This sequence belongs to the reaction center PufL/M/PsbA/D family. As to quaternary structure, PSII is composed of 1 copy each of membrane proteins PsbA, PsbB, PsbC, PsbD, PsbE, PsbF, PsbH, PsbI, PsbJ, PsbK, PsbL, PsbM, PsbT, PsbX, PsbY, PsbZ, Psb30/Ycf12, at least 3 peripheral proteins of the oxygen-evolving complex and a large number of cofactors. It forms dimeric complexes. The D1/D2 heterodimer binds P680, chlorophylls that are the primary electron donor of PSII, and subsequent electron acceptors. It shares a non-heme iron and each subunit binds pheophytin, quinone, additional chlorophylls, carotenoids and lipids. D1 provides most of the ligands for the Mn4-Ca-O5 cluster of the oxygen-evolving complex (OEC). There is also a Cl(-1) ion associated with D1 and D2, which is required for oxygen evolution. The PSII complex binds additional chlorophylls, carotenoids and specific lipids. serves as cofactor. Post-translationally, tyr-161 forms a radical intermediate that is referred to as redox-active TyrZ, YZ or Y-Z. C-terminally processed by CTPA; processing is essential to allow assembly of the oxygen-evolving complex and thus photosynthetic growth.

It is found in the plastid. The protein localises to the chloroplast thylakoid membrane. It carries out the reaction 2 a plastoquinone + 4 hnu + 2 H2O = 2 a plastoquinol + O2. In terms of biological role, photosystem II (PSII) is a light-driven water:plastoquinone oxidoreductase that uses light energy to abstract electrons from H(2)O, generating O(2) and a proton gradient subsequently used for ATP formation. It consists of a core antenna complex that captures photons, and an electron transfer chain that converts photonic excitation into a charge separation. The D1/D2 (PsbA/PsbD) reaction center heterodimer binds P680, the primary electron donor of PSII as well as several subsequent electron acceptors. The sequence is that of Photosystem II protein D1 from Adiantum capillus-veneris (Maidenhair fern).